The chain runs to 238 residues: Probable transcriptional regulatory protein CAB166 (238 aa).

The protein belongs to the TACO1 family.

It localises to the cytoplasm. The chain is Probable transcriptional regulatory protein CAB166 from Chlamydia abortus (strain DSM 27085 / S26/3) (Chlamydophila abortus).